Reading from the N-terminus, the 212-residue chain is MSVDEKVARALKGTTTVGIRSEKAVVLAADKRATAGNFIVHKRVEKIVKISDYMAMTTAGLVADAQVLADVLRMEVKNYELFHKKRMSVKAAATFLSNVLHSARFYPYIVQLLVGGFDTAPRLYSLDWFGTVAEEEFLVTGSGSPMAVGVIEAEYNPNMDLEELVNLAVRAVFAATRRDTASGEGIDVAVIDRNGITMRHYRLGDVIRLVRP.

Positions 1–13 (MSVDEKVARALKG) are cleaved as a propeptide — removed in mature form; by autocatalysis. Thr-14 (nucleophile) is an active-site residue.

Belongs to the peptidase T1B family. In terms of assembly, the 20S proteasome core is composed of 14 alpha and 14 beta subunits that assemble into four stacked heptameric rings, resulting in a barrel-shaped structure. The two inner rings, each composed of seven catalytic beta subunits, are sandwiched by two outer rings, each composed of seven alpha subunits. The catalytic chamber with the active sites is on the inside of the barrel. Has a gated structure, the ends of the cylinder being occluded by the N-termini of the alpha-subunits. Is capped at one or both ends by the proteasome regulatory ATPase, PAN.

It localises to the cytoplasm. The catalysed reaction is Cleavage of peptide bonds with very broad specificity.. With respect to regulation, the formation of the proteasomal ATPase PAN-20S proteasome complex, via the docking of the C-termini of PAN into the intersubunit pockets in the alpha-rings, triggers opening of the gate for substrate entry. Interconversion between the open-gate and close-gate conformations leads to a dynamic regulation of the 20S proteasome proteolysis activity. Component of the proteasome core, a large protease complex with broad specificity involved in protein degradation. This is Proteasome subunit beta 2 from Ignicoccus hospitalis (strain KIN4/I / DSM 18386 / JCM 14125).